The following is a 430-amino-acid chain: Adenylosuccinate synthetase (430 aa).

Residues 12-18 (GDEGKGK) and 40-42 (GHT) contribute to the GTP site. D13 functions as the Proton acceptor in the catalytic mechanism. D13 and G40 together coordinate Mg(2+). IMP is bound by residues 13–16 (DEGK), 38–41 (NAGH), T128, R142, Q223, T238, and R302. H41 acts as the Proton donor in catalysis. Position 298–304 (298–304 (TTTGRPR)) interacts with substrate. GTP is bound by residues R304, 330–332 (SID), and 412–414 (SVG).

Belongs to the adenylosuccinate synthetase family. In terms of assembly, homodimer. It depends on Mg(2+) as a cofactor.

The protein resides in the cytoplasm. The enzyme catalyses IMP + L-aspartate + GTP = N(6)-(1,2-dicarboxyethyl)-AMP + GDP + phosphate + 2 H(+). It functions in the pathway purine metabolism; AMP biosynthesis via de novo pathway; AMP from IMP: step 1/2. Functionally, plays an important role in the de novo pathway of purine nucleotide biosynthesis. Catalyzes the first committed step in the biosynthesis of AMP from IMP. In Streptococcus agalactiae serotype Ia (strain ATCC 27591 / A909 / CDC SS700), this protein is Adenylosuccinate synthetase.